The chain runs to 116 residues: Ribonuclease P protein component (116 aa).

Belongs to the RnpA family. As to quaternary structure, consists of a catalytic RNA component (M1 or rnpB) and a protein subunit.

It catalyses the reaction Endonucleolytic cleavage of RNA, removing 5'-extranucleotides from tRNA precursor.. Functionally, RNaseP catalyzes the removal of the 5'-leader sequence from pre-tRNA to produce the mature 5'-terminus. It can also cleave other RNA substrates such as 4.5S RNA. The protein component plays an auxiliary but essential role in vivo by binding to the 5'-leader sequence and broadening the substrate specificity of the ribozyme. This chain is Ribonuclease P protein component, found in Caldanaerobacter subterraneus subsp. tengcongensis (strain DSM 15242 / JCM 11007 / NBRC 100824 / MB4) (Thermoanaerobacter tengcongensis).